The sequence spans 179 residues: Peptidyl-tRNA hydrolase (179 aa).

Residue tyrosine 14 participates in tRNA binding. Residue histidine 19 is the Proton acceptor of the active site. Residues tyrosine 61, asparagine 63, and asparagine 107 each contribute to the tRNA site.

It belongs to the PTH family. As to quaternary structure, monomer.

It is found in the cytoplasm. It catalyses the reaction an N-acyl-L-alpha-aminoacyl-tRNA + H2O = an N-acyl-L-amino acid + a tRNA + H(+). In terms of biological role, hydrolyzes ribosome-free peptidyl-tRNAs (with 1 or more amino acids incorporated), which drop off the ribosome during protein synthesis, or as a result of ribosome stalling. Catalyzes the release of premature peptidyl moieties from peptidyl-tRNA molecules trapped in stalled 50S ribosomal subunits, and thus maintains levels of free tRNAs and 50S ribosomes. This is Peptidyl-tRNA hydrolase from Campylobacter lari (strain RM2100 / D67 / ATCC BAA-1060).